A 39-amino-acid chain; its full sequence is Photosystem II reaction center protein L (39 aa).

The chain crosses the membrane as a helical span at residues 18 to 38 (ILYWGLLLIFVLAVLFSNYFF).

It belongs to the PsbL family. As to quaternary structure, PSII is composed of 1 copy each of membrane proteins PsbA, PsbB, PsbC, PsbD, PsbE, PsbF, PsbH, PsbI, PsbJ, PsbK, PsbL, PsbM, PsbT, PsbX, PsbY, PsbZ, Psb30/Ycf12, at least 3 peripheral proteins of the oxygen-evolving complex and a large number of cofactors. It forms dimeric complexes.

Its subcellular location is the plastid membrane. Functionally, one of the components of the core complex of photosystem II (PSII). PSII is a light-driven water:plastoquinone oxidoreductase that uses light energy to abstract electrons from H(2)O, generating O(2) and a proton gradient subsequently used for ATP formation. It consists of a core antenna complex that captures photons, and an electron transfer chain that converts photonic excitation into a charge separation. This subunit is found at the monomer-monomer interface and is required for correct PSII assembly and/or dimerization. The chain is Photosystem II reaction center protein L from Cuscuta pentagona (Five-angled dodder).